We begin with the raw amino-acid sequence, 295 residues long: MSASAQHSQAQQQQQQKSCNCDLLLWRNPVQTGKYFGGSLLALLILKKVNLITFFLKVAYTILFTTGSIEFVSKLFLGQGLITKYGPKECPNIAGFIKPHIDEALKQLPVFQAHIRKTVFAQVPKHTFKTAVALFLLHKFFSWFSIWTIVFVADIFTFTLPVIYHSYKHEIDATVAQGVEISKQKTQEFSQMACEKTKPYLDKVESKLGPISNLVKSKTAPVSSTAGPQTASTSKLAADVPLEPESKAYTSSAQVMPEVPQHEPSTTQEFNVDELSNELKKSTKNLQNELEKNNA.

Over 1-50 (MSASAQHSQAQQQQQQKSCNCDLLLWRNPVQTGKYFGGSLLALLILKKVN) the chain is Cytoplasmic. One can recognise a Reticulon domain in the interval 20 to 220 (NCDLLLWRNP…ISNLVKSKTA (201 aa)). The chain crosses the membrane as a helical span at residues 51–73 (LITFFLKVAYTILFTTGSIEFVS). The Lumenal segment spans residues 74 to 142 (KLFLGQGLIT…ALFLLHKFFS (69 aa)). The helical transmembrane segment at 143–163 (WFSIWTIVFVADIFTFTLPVI) threads the bilayer. Over 164–295 (YHSYKHEIDA…LQNELEKNNA (132 aa)) the chain is Cytoplasmic. Residues T186 and T219 each carry the phosphothreonine modification. A compositionally biased stretch (polar residues) spans 219 to 235 (TAPVSSTAGPQTASTSK). A disordered region spans residues 219–295 (TAPVSSTAGP…LQNELEKNNA (77 aa)). A Phosphoserine modification is found at S232. Positions 265–295 (STTQEFNVDELSNELKKSTKNLQNELEKNNA) form a coiled coil.

As to quaternary structure, interacts with POM33.

Its subcellular location is the endoplasmic reticulum membrane. The protein is Reticulon-like protein 1 (RTN1) of Saccharomyces cerevisiae (strain ATCC 204508 / S288c) (Baker's yeast).